The following is a 65-amino-acid chain: Potassium channel toxin alpha-KTx 12.6 (65 aa).

Positions 1-22 (MKMKIFIITIVIALFITSIVEA) are cleaved as a signal peptide. Disulfide bonds link Cys-30/Cys-51, Cys-36/Cys-56, and Cys-40/Cys-58.

It belongs to the short scorpion toxin superfamily. Potassium channel inhibitor family. Alpha-KTx 12 subfamily. In terms of tissue distribution, expressed by the venom gland.

Its subcellular location is the secreted. Functionally, inhibits voltage-gated potassium channels. This Lychas mucronatus (Chinese swimming scorpion) protein is Potassium channel toxin alpha-KTx 12.6.